The sequence spans 191 residues: Protein Ves (191 aa).

This sequence belongs to the Ves family.

The sequence is that of Protein Ves from Escherichia coli (strain 55989 / EAEC).